The chain runs to 395 residues: Putative 8-amino-7-oxononanoate synthase (395 aa).

Arg23 lines the substrate pocket. 110–111 contributes to the pyridoxal 5'-phosphate binding site; it reads GY. A substrate-binding site is contributed by His135. Residues Ser182, 207–210, and 239–242 each bind pyridoxal 5'-phosphate; these read DEAH and TFSK. Lys242 bears the N6-(pyridoxal phosphate)lysine mark. Position 356 (Thr356) interacts with substrate.

It belongs to the class-II pyridoxal-phosphate-dependent aminotransferase family. BioF subfamily. As to quaternary structure, homodimer. It depends on pyridoxal 5'-phosphate as a cofactor.

It catalyses the reaction 6-carboxyhexanoyl-[ACP] + L-alanine + H(+) = (8S)-8-amino-7-oxononanoate + holo-[ACP] + CO2. It participates in cofactor biosynthesis; biotin biosynthesis. Functionally, catalyzes the decarboxylative condensation of pimeloyl-[acyl-carrier protein] and L-alanine to produce 8-amino-7-oxononanoate (AON), [acyl-carrier protein], and carbon dioxide. The protein is Putative 8-amino-7-oxononanoate synthase (bioF) of Bacillus cereus (strain ATCC 10987 / NRS 248).